The chain runs to 785 residues: Endonuclease MutS2 (785 aa).

Position 335–342 (335–342) interacts with ATP; the sequence is GPNTGGKT. A Smr domain is found at 710 to 785; sequence LDLRGERYEN…GSGVTIVELK (76 aa).

The protein belongs to the DNA mismatch repair MutS family. MutS2 subfamily. As to quaternary structure, homodimer. Binds to stalled ribosomes, contacting rRNA.

Endonuclease that is involved in the suppression of homologous recombination and thus may have a key role in the control of bacterial genetic diversity. Its function is as follows. Acts as a ribosome collision sensor, splitting the ribosome into its 2 subunits. Detects stalled/collided 70S ribosomes which it binds and splits by an ATP-hydrolysis driven conformational change. Acts upstream of the ribosome quality control system (RQC), a ribosome-associated complex that mediates the extraction of incompletely synthesized nascent chains from stalled ribosomes and their subsequent degradation. Probably generates substrates for RQC. The chain is Endonuclease MutS2 from Bacillus velezensis (strain DSM 23117 / BGSC 10A6 / LMG 26770 / FZB42) (Bacillus amyloliquefaciens subsp. plantarum).